An 89-amino-acid chain; its full sequence is Small ribosomal subunit protein uS15 (89 aa).

It belongs to the universal ribosomal protein uS15 family. In terms of assembly, part of the 30S ribosomal subunit. Forms a bridge to the 50S subunit in the 70S ribosome, contacting the 23S rRNA.

Its function is as follows. One of the primary rRNA binding proteins, it binds directly to 16S rRNA where it helps nucleate assembly of the platform of the 30S subunit by binding and bridging several RNA helices of the 16S rRNA. In terms of biological role, forms an intersubunit bridge (bridge B4) with the 23S rRNA of the 50S subunit in the ribosome. In Salinispora arenicola (strain CNS-205), this protein is Small ribosomal subunit protein uS15.